The chain runs to 75 residues: uncharacterized protein (75 aa).

This is an uncharacterized protein from Bacillus subtilis (strain 168).